The following is a 444-amino-acid chain: Enolase 2 (444 aa).

Substrate-binding residues include His165 and Glu174. The active-site Proton donor is Glu217. Asp252, Glu303, and Asp330 together coordinate Mg(2+). Positions 303 and 330 each coordinate substrate. Catalysis depends on Lys355, which acts as the Proton acceptor. Residues 382–385 (SHRS) and Lys406 contribute to the substrate site.

Belongs to the enolase family. Homodimer. Requires Mg(2+) as cofactor.

Its subcellular location is the cytoplasm. It catalyses the reaction (2R)-2-phosphoglycerate = phosphoenolpyruvate + H2O. Its pathway is carbohydrate degradation; glycolysis; pyruvate from D-glyceraldehyde 3-phosphate: step 4/5. The polypeptide is Enolase 2 (ENO2) (Toxoplasma gondii).